Here is a 474-residue protein sequence, read N- to C-terminus: Trehalose-6-phosphate synthase (474 aa).

Residue Arg10 participates in D-glucose 6-phosphate binding. 22 to 23 is a UDP-alpha-D-glucose binding site; it reads GG. Positions 77 and 131 each coordinate D-glucose 6-phosphate. The UDP-alpha-D-glucose site is built by Arg263 and Lys268. Arg301 serves as a coordination point for D-glucose 6-phosphate. UDP-alpha-D-glucose-binding positions include Phe340 and 366–370; that span reads LVAKE.

This sequence belongs to the glycosyltransferase 20 family. Homotetramer.

It carries out the reaction D-glucose 6-phosphate + UDP-alpha-D-glucose = alpha,alpha-trehalose 6-phosphate + UDP + H(+). The protein operates within glycan biosynthesis; trehalose biosynthesis. In terms of biological role, probably involved in the osmoprotection via the biosynthesis of trehalose. Catalyzes the transfer of glucose from UDP-alpha-D-glucose (UDP-Glc) to D-glucose 6-phosphate (Glc-6-P) to form trehalose-6-phosphate. Acts with retention of the anomeric configuration of the UDP-sugar donor. The chain is Trehalose-6-phosphate synthase from Shigella dysenteriae serotype 1 (strain Sd197).